The following is a 208-amino-acid chain: uncharacterized protein (208 aa).

4Fe-4S ferredoxin-type domains lie at 59–88 (GVLV…SVGT), 114–145 (GDLN…WQQK), 147–176 (GCIT…VNTE), and 174–203 (NTES…IIEW). [4Fe-4S] cluster contacts are provided by cysteine 68, cysteine 71, cysteine 74, cysteine 78, cysteine 123, cysteine 126, cysteine 131, cysteine 135, cysteine 156, cysteine 159, cysteine 162, cysteine 166, cysteine 183, cysteine 186, cysteine 189, and cysteine 193.

This is an uncharacterized protein from Escherichia coli O157:H7.